A 346-amino-acid polypeptide reads, in one-letter code: T-box protein 12 (346 aa).

Acidic residues predominate over residues Asp33 to Asp48. Residues Asp33 to Ile66 form a disordered region. Residues Leu86 to Asp268 constitute a DNA-binding region (T-box).

It is found in the nucleus. Its function is as follows. Transcription factor. Involved in cell fate determination; required to pattern the posterior hindgut. Involved in motor neuron fate determination and maintenance, acting as a transcriptional repressor to counteract gene activation by transcription factor unc-3 in a subset of motor neurons. Required throughout development to repress transcription by unc-3, probably acting by binding to specific promoter elements. Represses expression of VA and VB motor neuron-specific effector genes, such as DEG/ENaC channel del-1 and the innexin inx-12, in DA and DB motor neurons. Represses expression of transcription factor bnc-1, perhaps acting directly, in DA and DB motor neurons. The sequence is that of T-box protein 12 (mab-9) from Caenorhabditis elegans.